We begin with the raw amino-acid sequence, 630 residues long: Phosphomethylpyrimidine synthase (630 aa).

Substrate contacts are provided by residues N227, M256, Y285, H321, 341 to 343, 382 to 385, and E421; these read SRG and DGLR. H425 is a Zn(2+) binding site. Y448 is a binding site for substrate. H489 contributes to the Zn(2+) binding site. Residues C569, C572, and C577 each contribute to the [4Fe-4S] cluster site.

It belongs to the ThiC family. Homodimer. The cofactor is [4Fe-4S] cluster.

The enzyme catalyses 5-amino-1-(5-phospho-beta-D-ribosyl)imidazole + S-adenosyl-L-methionine = 4-amino-2-methyl-5-(phosphooxymethyl)pyrimidine + CO + 5'-deoxyadenosine + formate + L-methionine + 3 H(+). It participates in cofactor biosynthesis; thiamine diphosphate biosynthesis. Catalyzes the synthesis of the hydroxymethylpyrimidine phosphate (HMP-P) moiety of thiamine from aminoimidazole ribotide (AIR) in a radical S-adenosyl-L-methionine (SAM)-dependent reaction. The polypeptide is Phosphomethylpyrimidine synthase (Hydrogenovibrio crunogenus (strain DSM 25203 / XCL-2) (Thiomicrospira crunogena)).